Here is a 991-residue protein sequence, read N- to C-terminus: UPF0182 protein RHA1_ro08670 (991 aa).

The next 7 membrane-spanning stretches (helical) occupy residues Val16 to Val36, Leu61 to Trp81, Phe115 to Trp135, Leu170 to His190, Val214 to Asp234, Arg263 to Val283, and Met291 to Ile311. A disordered region spans residues Thr902–Ser940. The segment covering Gly903–Thr914 has biased composition (low complexity). Residues Thr915–Ala938 are compositionally biased toward pro residues.

Belongs to the UPF0182 family.

The protein resides in the cell membrane. The polypeptide is UPF0182 protein RHA1_ro08670 (Rhodococcus jostii (strain RHA1)).